The primary structure comprises 101 residues: Replication restart protein PriB (101 aa).

One can recognise an SSB domain in the interval 1-101 (MATNHLVLSG…LHAENVELKT (101 aa)).

It belongs to the PriB family. In terms of assembly, homodimer. Interacts with PriA and DnaT. Component of the replication restart primosome. Primosome assembly occurs via a 'hand-off' mechanism. PriA binds to replication forks, subsequently PriB then DnaT bind; DnaT then displaces ssDNA to generate the helicase loading substrate.

Involved in the restart of stalled replication forks, which reloads the replicative helicase on sites other than the origin of replication; the PriA-PriB pathway is the major replication restart pathway. During primosome assembly it facilitates complex formation between PriA and DnaT on DNA; stabilizes PriA on DNA. Stimulates the DNA unwinding activity of PriA helicase. The sequence is that of Replication restart protein PriB from Shewanella woodyi (strain ATCC 51908 / MS32).